A 299-amino-acid chain; its full sequence is Protoheme IX farnesyltransferase (299 aa).

The next 9 membrane-spanning stretches (helical) occupy residues 27 to 47 (VVAL…HEHF), 53 to 73 (LIAL…NHLI), 97 to 117 (FNVL…LMLW), 121 to 141 (LTAY…TLYL), 149 to 169 (IVIA…SITG), 175 to 195 (AWLL…ALAI), 222 to 242 (ILLY…VGMA), 244 to 264 (YLYL…AIKL), and 273 to 293 (AIEM…ALLL).

The protein belongs to the UbiA prenyltransferase family. Protoheme IX farnesyltransferase subfamily.

The protein resides in the cell inner membrane. The catalysed reaction is heme b + (2E,6E)-farnesyl diphosphate + H2O = Fe(II)-heme o + diphosphate. The protein operates within porphyrin-containing compound metabolism; heme O biosynthesis; heme O from protoheme: step 1/1. In terms of biological role, converts heme B (protoheme IX) to heme O by substitution of the vinyl group on carbon 2 of heme B porphyrin ring with a hydroxyethyl farnesyl side group. The chain is Protoheme IX farnesyltransferase from Vibrio vulnificus (strain YJ016).